We begin with the raw amino-acid sequence, 484 residues long: N-succinylglutamate 5-semialdehyde dehydrogenase (484 aa).

221–226 (GSAAAG) serves as a coordination point for NAD(+). Residues glutamate 244 and cysteine 278 contribute to the active site.

The protein belongs to the aldehyde dehydrogenase family. AstD subfamily.

It catalyses the reaction N-succinyl-L-glutamate 5-semialdehyde + NAD(+) + H2O = N-succinyl-L-glutamate + NADH + 2 H(+). It functions in the pathway amino-acid degradation; L-arginine degradation via AST pathway; L-glutamate and succinate from L-arginine: step 4/5. In terms of biological role, catalyzes the NAD-dependent reduction of succinylglutamate semialdehyde into succinylglutamate. This Caulobacter sp. (strain K31) protein is N-succinylglutamate 5-semialdehyde dehydrogenase.